The primary structure comprises 824 residues: MEGPRSDVGRWGRSPWQPTTPSPEPEPEPEPDRSSRSRRGGGRSFWARCCGCCSCGNRADDDWGPEPSGSRSRGTSSRGGGSRGGDSRGRDSRGGRRPESRGSGVNAAGDGTIREGMLVVNGVDLLCSRSDQNRREHHTDEFEYDELILRRGQPFHIILFLNREYESSDRIALELLIGNNPEVGKGTHVIIPVGKGGSGGWKAQVTKTNGHNLTLRVHTSPNAIIGKFQFTVRTRSEAGEFQLPFDPRNEIYILFNPWCPEDIVYVDHEDWRQEYVLNESGRIYYGTEAQIGERTWNYGQFDHGVLDACLYILDRRGMPYGGRGDPVSVSRVVSAMVNSLDDNGVLIGNWTGDYSRGTNPSAWVGSVEILLSYLRTGYSVPYGQCWVFAGVTTTVLRCLGLATRTVTNFNSAHDTDTSLTMDIYFDENMKPLEHLNHDSVWNFHVWNDCWMKRPDLPSGFDGWQVVDATPQETSSGIFCCGPCSVESIKNGLVYMKYDTPFIFAEVNSDKVYWQRQDDGSFKIVYVEEKAIGTLIVTKAINSNMREDITHIYKHPEGSEAERKAVEKAAAHGSKPNVYATRDSAEDVAMQVEAQDAVMGQDLTVSVVLTNRGSSRRTVKLHLYLCVTYYTGVSGPTFKETKKEVVLAPGASDTVAMPVAYKEYKPHLVDQGAMLLNVSGHVKESGQVLAKQHTFRLRTPDLSLTLLGAAVVGQECEVQIVFKNPLPITLTNVVFRLEGSGLQRPKVLNVGDIGGNETVTLRQTFVPVRPGPRQLIASLDSPQLSQVHGVIQVDVAPSSGGRGFSEAVGDSRSGENIPMAFRGGA.

Over residues 1 to 10 the composition is skewed to basic and acidic residues; it reads MEGPRSDVGR. Disordered regions lie at residues 1–44 and 61–110; these read MEGP…GGRS and DDWG…AAGD. At Thr20 the chain carries Phosphothreonine. Phosphoserine is present on residues Ser22, Ser70, Ser92, Ser100, and Ser103. Over residues 65–76 the composition is skewed to low complexity; the sequence is PEPSGSRSRGTS. The segment covering 85 to 100 has biased composition (basic and acidic residues); the sequence is GDSRGRDSRGGRRPES. Active-site residues include Cys385, His444, and Asp467. The Ca(2+) site is built by Asn507, Asp509, Glu556, and Glu561. Residues 801–824 are disordered; that stretch reads RGFSEAVGDSRSGENIPMAFRGGA. Ser812 is subject to Phosphoserine.

This sequence belongs to the transglutaminase superfamily. Transglutaminase family. In terms of assembly, interacts with PLAAT4. Ca(2+) serves as cofactor. Palmitoylated. In terms of processing, the membrane anchorage region possesses a cluster of five cysteines within which fatty acid(s) may become thioester-linked. It is subject to phorbol ester-stimulated phosphorylation and is hypersensitive to proteolysis, which releases the enzyme in a soluble form. Post-translationally, tyrosine-phosphorylated.

The protein localises to the membrane. The enzyme catalyses L-glutaminyl-[protein] + L-lysyl-[protein] = [protein]-L-lysyl-N(6)-5-L-glutamyl-[protein] + NH4(+). Catalyzes the cross-linking of proteins and the conjugation of polyamines to proteins. Responsible for cross-linking epidermal proteins during formation of the stratum corneum. Involved in cell proliferation. The protein is Protein-glutamine gamma-glutamyltransferase K (Tgm1) of Rattus norvegicus (Rat).